The primary structure comprises 340 residues: MTFPNVKFIGNKRVLSIQSSVSHGYVGNRSATFPLQLHEWEVDVVPTVHFSNHLGYGATRGSACIPEEVHDLLNALLQDNGIVYDAILTGFVPNHDIIQVIFDCVLAYKKDHPKVLWLLDPVMGDQGKMYVDTNVISTYKAMIPHAFAITPNAFEVEILTDIVIHTQMDAKRGLEKIYQLYGIQNAIITSFEVEESPGTLFCMGYSCEHGKPQLFLYQFPSLSGVFTGTGDLFSGLLLAKYREELDKRKHQQSDETKQTKRPTVLACAVGQVLSCMHTVLVNTKTYADEILLEDPKIASDEFLLSNARELRLIQSRTALLSKKSIYEAEFLPGFEEGEDV.

Positions 19 and 130 each coordinate substrate. ATP contacts are provided by residues 189–190 and 218–230; these read TS and QFPS…TGTG. Aspartate 231 provides a ligand contact to substrate.

Belongs to the pyridoxine kinase family. A divalent metal cation serves as cofactor.

It is found in the cytoplasm. It localises to the nucleus. It carries out the reaction pyridoxal + ATP = pyridoxal 5'-phosphate + ADP + H(+). Functionally, required for synthesis of pyridoxal-5-phosphate from vitamin B6. This is Putative pyridoxal kinase C18.10 from Schizosaccharomyces pombe (strain 972 / ATCC 24843) (Fission yeast).